Consider the following 316-residue polypeptide: Adenine deaminase (316 aa).

Residues histidine 14, histidine 16, and histidine 194 each contribute to the Zn(2+) site. Glutamate 197 (proton donor) is an active-site residue. Residue aspartate 275 coordinates Zn(2+). Aspartate 276 provides a ligand contact to substrate.

Belongs to the metallo-dependent hydrolases superfamily. Adenosine and AMP deaminases family. Adenine deaminase type 2 subfamily. Requires Zn(2+) as cofactor.

The catalysed reaction is adenine + H2O + H(+) = hypoxanthine + NH4(+). In terms of biological role, catalyzes the hydrolytic deamination of adenine to hypoxanthine. Plays an important role in the purine salvage pathway and in nitrogen catabolism. The protein is Adenine deaminase of Pseudomonas paraeruginosa (strain DSM 24068 / PA7) (Pseudomonas aeruginosa (strain PA7)).